The following is a 122-amino-acid chain: Large ribosomal subunit protein uL18 (122 aa).

The tract at residues 1 to 26 (MSNLSRKQQTQKRHRRLRRHLKGTAQ) is disordered. Over residues 9 to 22 (QTQKRHRRLRRHLK) the composition is skewed to basic residues.

The protein belongs to the universal ribosomal protein uL18 family. Part of the 50S ribosomal subunit; part of the 5S rRNA/L5/L18/L25 subcomplex. Contacts the 5S and 23S rRNAs.

In terms of biological role, this is one of the proteins that bind and probably mediate the attachment of the 5S RNA into the large ribosomal subunit, where it forms part of the central protuberance. The chain is Large ribosomal subunit protein uL18 from Prochlorococcus marinus (strain MIT 9313).